We begin with the raw amino-acid sequence, 145 residues long: Ecdysteroid-regulated 16 kDa protein (145 aa).

An N-terminal signal peptide occupies residues 1–16 (MLFYITVTVLLVSAQA). 2 disulfides stabilise this stretch: C22–C137 and C90–C97. N51 carries N-linked (GlcNAc...) asparagine glycosylation.

Belongs to the NPC2 family.

The protein localises to the secreted. The chain is Ecdysteroid-regulated 16 kDa protein (ESR16) from Manduca sexta (Tobacco hawkmoth).